Consider the following 236-residue polypeptide: Leucyl/phenylalanyl-tRNA--protein transferase (236 aa).

Belongs to the L/F-transferase family.

It is found in the cytoplasm. The catalysed reaction is N-terminal L-lysyl-[protein] + L-leucyl-tRNA(Leu) = N-terminal L-leucyl-L-lysyl-[protein] + tRNA(Leu) + H(+). It carries out the reaction N-terminal L-arginyl-[protein] + L-leucyl-tRNA(Leu) = N-terminal L-leucyl-L-arginyl-[protein] + tRNA(Leu) + H(+). It catalyses the reaction L-phenylalanyl-tRNA(Phe) + an N-terminal L-alpha-aminoacyl-[protein] = an N-terminal L-phenylalanyl-L-alpha-aminoacyl-[protein] + tRNA(Phe). Functions in the N-end rule pathway of protein degradation where it conjugates Leu, Phe and, less efficiently, Met from aminoacyl-tRNAs to the N-termini of proteins containing an N-terminal arginine or lysine. The sequence is that of Leucyl/phenylalanyl-tRNA--protein transferase from Shewanella sp. (strain MR-7).